Reading from the N-terminus, the 246-residue chain is MISDSMTVEEIRLHLGLALKEKDFVVDKTGVKTIEIIGASFVADEPFIFGALNDEYIQRELEWYKSKSLFVKDIPGETPKIWQQVASSKGEINSNYGWAIWSEDNYAQYDMCLAELGQNPDSRRGIMIYTRPSMQFDYNKDGMSDFMCTNTVQYLIRDKKINAVVNMRSNDVVFGFRNDYAWQKYVLDKLVSDLNAGDPTRQYKAGSIIWNVGSLHVYSRHFYLVDHWWKTGETHIVKKDYKGEWK.

The active site involves C148.

The protein belongs to the thymidylate synthase family.

It carries out the reaction dCMP + (6R)-5,10-methylene-5,6,7,8-tetrahydrofolate + H2O = 5-hydroxymethyl-dCMP + (6S)-5,6,7,8-tetrahydrofolate. The protein is Deoxycytidylate 5-hydroxymethyltransferase (42) of Enterobacteria phage T6 (Bacteriophage T6).